The sequence spans 384 residues: MSAAVAPTCKATMYVCGITPYDATHLGHAATYLAFDLIHRLWLDLGHEVHYVQNVTDVDDPLFERADRNGVDWRDLAEREVALFRDDMASLRILPPHDYVAATETIVEIVELVDKMLVSGAAYVIDDEYPDIYFRADATLQFGYESGYDRDTMLRLYEQSGGDPRRPGKNGELDALLWRAARPGEPSWSSPFGPGRPGWHVECAAIALSRIGIGLDIQGGGSDLIFPHHEFTAAHAECVRGERRFARHYVHAGMIGWDEHKMSKSRGNLVLVSTLRAQGAPPSAIRLGLLAGHYRADRFWSSQLLDDAIARLHRWRTAASMPAGPDVADVIARVRGYLADDLDTPKAIAALDGWVTDALEYGGHDAAAPKLLATAIDALLGVDL.

Cys-16 serves as a coordination point for Zn(2+). Residues 16 to 19 (CGIT), Thr-31, and 54 to 56 (NVT) contribute to the L-cysteinyl-5'-AMP site. Positions 18 to 28 (ITPYDATHLGH) match the 'HIGH' region motif. A 'ERGGDP' region motif is present at residues 159–164 (QSGGDP). Trp-199 lines the L-cysteinyl-5'-AMP pocket. Residue Cys-203 participates in Zn(2+) binding. 221–223 (GSD) contributes to the L-cysteinyl-5'-AMP binding site. His-228 lines the Zn(2+) pocket. Ile-255 is an L-cysteinyl-5'-AMP binding site. Positions 261-265 (KMSKS) match the 'KMSKS' region motif.

The protein belongs to the class-I aminoacyl-tRNA synthetase family. MshC subfamily. In terms of assembly, monomer. Requires Zn(2+) as cofactor.

It catalyses the reaction 1D-myo-inositol 2-amino-2-deoxy-alpha-D-glucopyranoside + L-cysteine + ATP = 1D-myo-inositol 2-(L-cysteinylamino)-2-deoxy-alpha-D-glucopyranoside + AMP + diphosphate + H(+). Catalyzes the ATP-dependent condensation of GlcN-Ins and L-cysteine to form L-Cys-GlcN-Ins. The sequence is that of L-cysteine:1D-myo-inositol 2-amino-2-deoxy-alpha-D-glucopyranoside ligase from Mycobacterium leprae (strain Br4923).